Consider the following 332-residue polypeptide: tRNA dimethylallyltransferase (332 aa).

14–21 (GPTASGKT) contributes to the ATP binding site. Residue 16 to 21 (TASGKT) coordinates substrate. The interval 39-42 (DSMQ) is interaction with substrate tRNA. Residues 312–332 (NKRSSNHDCKRKHPRPSTREL) are disordered. Basic residues predominate over residues 320–332 (CKRKHPRPSTREL).

It belongs to the IPP transferase family. Monomer. It depends on Mg(2+) as a cofactor.

The enzyme catalyses adenosine(37) in tRNA + dimethylallyl diphosphate = N(6)-dimethylallyladenosine(37) in tRNA + diphosphate. Functionally, catalyzes the transfer of a dimethylallyl group onto the adenine at position 37 in tRNAs that read codons beginning with uridine, leading to the formation of N6-(dimethylallyl)adenosine (i(6)A). The protein is tRNA dimethylallyltransferase of Staphylococcus epidermidis (strain ATCC 35984 / DSM 28319 / BCRC 17069 / CCUG 31568 / BM 3577 / RP62A).